The primary structure comprises 505 residues: Formate--tetrahydrofolate ligase (505 aa).

This sequence belongs to the formate--tetrahydrofolate ligase family.

The catalysed reaction is (6S)-5,6,7,8-tetrahydrofolate + formate + ATP = (6R)-10-formyltetrahydrofolate + ADP + phosphate. Its pathway is one-carbon metabolism; tetrahydrofolate interconversion. The chain is Formate--tetrahydrofolate ligase (fhs) from Bifidobacterium longum (strain NCC 2705).